Consider the following 348-residue polypeptide: Growth-regulating factor 5 (348 aa).

The QLQ domain occupies 24–59; it reads VFTAAQWAELEQQALIYKYLVAGVPVPGDLLLPIRP. Short sequence motifs (bipartite nuclear localization signal) lie at residues 94–112 and 130–137; these read KKLD…KKWR and RGRNRSRK. A WRC domain is found at 97 to 141; sequence DPEPWRCRRTDGKKWRCSKEAHPDSKYCERHMHRGRNRSRKPVES. 2 disordered regions span residues 125–165 and 306–348; these read ERHM…HDTD and LRPF…PRCD. The segment covering 127 to 136 has biased composition (basic residues); that stretch reads HMHRGRNRSR. Over residues 148-161 the composition is skewed to polar residues; it reads PQSQPQLSNVTTAT. Residues 306-320 are compositionally biased toward basic and acidic residues; it reads LRPFFDEWPGRRDSW. The segment covering 329 to 340 has biased composition (polar residues); sequence NQTSFSTTQLSI.

The protein belongs to the GRF family.

Its subcellular location is the nucleus. Its function is as follows. Transcription activator that plays a regulatory role in gibberellin-induced stem elongation. The sequence is that of Growth-regulating factor 5 (GRF5) from Oryza sativa subsp. japonica (Rice).